Reading from the N-terminus, the 299-residue chain is Superkiller complex protein 8 (299 aa).

WD repeat units lie at residues 11-48 (AHED…FLTE), 54-93 (KHIL…LHKT), 96-135 (SGPL…KLRS), 138-177 (NTNK…RVSE), 180-219 (AHGV…PYIA), 223-263 (GHSS…LDSS), and 266-299 (AHAD…ALKQ).

The protein belongs to the SKI8 family.

This Dictyostelium discoideum (Social amoeba) protein is Superkiller complex protein 8 (skic8).